An 874-amino-acid polypeptide reads, in one-letter code: Alanine--tRNA ligase (874 aa).

Residues His-564, His-568, Cys-665, and His-669 each coordinate Zn(2+).

The protein belongs to the class-II aminoacyl-tRNA synthetase family. Zn(2+) serves as cofactor.

The protein resides in the cytoplasm. It carries out the reaction tRNA(Ala) + L-alanine + ATP = L-alanyl-tRNA(Ala) + AMP + diphosphate. Catalyzes the attachment of alanine to tRNA(Ala) in a two-step reaction: alanine is first activated by ATP to form Ala-AMP and then transferred to the acceptor end of tRNA(Ala). Also edits incorrectly charged Ser-tRNA(Ala) and Gly-tRNA(Ala) via its editing domain. The protein is Alanine--tRNA ligase of Cupriavidus necator (strain ATCC 17699 / DSM 428 / KCTC 22496 / NCIMB 10442 / H16 / Stanier 337) (Ralstonia eutropha).